Here is a 235-residue protein sequence, read N- to C-terminus: Phosphoribosylaminoimidazole-succinocarboxamide synthase (235 aa).

The protein belongs to the SAICAR synthetase family.

It catalyses the reaction 5-amino-1-(5-phospho-D-ribosyl)imidazole-4-carboxylate + L-aspartate + ATP = (2S)-2-[5-amino-1-(5-phospho-beta-D-ribosyl)imidazole-4-carboxamido]succinate + ADP + phosphate + 2 H(+). It participates in purine metabolism; IMP biosynthesis via de novo pathway; 5-amino-1-(5-phospho-D-ribosyl)imidazole-4-carboxamide from 5-amino-1-(5-phospho-D-ribosyl)imidazole-4-carboxylate: step 1/2. In Caldanaerobacter subterraneus subsp. tengcongensis (strain DSM 15242 / JCM 11007 / NBRC 100824 / MB4) (Thermoanaerobacter tengcongensis), this protein is Phosphoribosylaminoimidazole-succinocarboxamide synthase.